The primary structure comprises 334 residues: Syntaxin-18 (334 aa).

The Cytoplasmic segment spans residues 1–308 (MAVDITLLFR…EDIREAIKNN (308 aa)). Disordered stretches follow at residues 29–50 (GGADGSRDELFRRSPRPKGDFS) and 166–225 (LSKL…GEDE). Basic and acidic residues-rich tracts occupy residues 33–50 (GSRDELFRRSPRPKGDFS) and 166–182 (LSKLEPEPHTKRKDSTS). The segment covering 183–192 (EKAPQNASQD) has biased composition (polar residues). A compositionally biased stretch (basic and acidic residues) spans 193-207 (SEGKPAAEELPEKPL). Residues 242–304 (IGEMNSLFDE…KEGNEDIREA (63 aa)) form the t-SNARE coiled-coil homology domain. The helical; Anchor for type IV membrane protein transmembrane segment at 309-329 (AGFRVWILFFLVMCSFSLLFL) threads the bilayer. The Lumenal portion of the chain corresponds to 330 to 334 (DWYDS).

It belongs to the syntaxin family. In terms of assembly, component of a SNARE complex consisting of STX18, USE1L, BNIP1/SEC20L, and SEC22B. RINT1/TIP20L and ZW10 are associated with the complex through interaction with BNIP1/SEC20L. Interacts directly with USE1L and BNIP1/SEC20L.

It localises to the endoplasmic reticulum membrane. Its subcellular location is the golgi apparatus membrane. In terms of biological role, syntaxin that may be involved in targeting and fusion of Golgi-derived retrograde transport vesicles with the ER. In Mus musculus (Mouse), this protein is Syntaxin-18 (Stx18).